Reading from the N-terminus, the 207-residue chain is Nitrophorin-1 (207 aa).

The signal sequence occupies residues 1–23 (MKSYTALLAVAILCLFAAVGVSG). 2 disulfide bridges follow: Cys25–Cys145 and Cys64–Cys194. His82 contributes to the heme binding site.

It belongs to the calycin superfamily. Nitrophorin family. In terms of tissue distribution, salivary gland (at protein level).

It is found in the secreted. Its function is as follows. Heme-based protein that deliver nitric oxide gas (NO) to the victim while feeding, resulting in vasodilation and inhibition of platelet aggregation. Reversibly binds nitric oxide (NO). Also binds tightly to histamine, which is released by the host to induce wound healing. The protein is Nitrophorin-1 of Rhodnius prolixus (Triatomid bug).